The chain runs to 885 residues: Cytosolic carboxypeptidase-like protein 5 (885 aa).

Positions 150 to 576 (YPFSYAECQD…AVAVAALDMA (427 aa)) constitute a Peptidase M14 domain. Residues His-247 and Glu-250 each contribute to the Zn(2+) site. 2 disordered regions span residues 341–364 (SGSA…TERE) and 392–428 (ESWE…QVPP). The segment covering 344-356 (ALKTSNQSNTSPP) has biased composition (polar residues). A compositionally biased stretch (basic and acidic residues) spans 393-408 (SWEKSGVQREAEHSDE). Polar residues predominate over residues 411–428 (SAQSRGETNSAPSEQVPP). His-440 provides a ligand contact to Zn(2+). The active-site Proton donor/acceptor is Glu-522. A compositionally biased stretch (polar residues) spans 606 to 668 (STGLTSNNRR…KSSPSFTFGT (63 aa)). Disordered stretches follow at residues 606-788 (STGL…RTAL) and 866-885 (ALLK…SLPT). Basic and acidic residues predominate over residues 682-691 (RECKAQEKRR). The segment covering 712 to 749 (LSAPVRAPLSPSSSSSSSSSSPSSSSSAPGPGSISLAG) has biased composition (low complexity).

It belongs to the peptidase M14 family. Zn(2+) is required as a cofactor.

It is found in the cytoplasm. The protein localises to the cytosol. The protein resides in the nucleus. It localises to the cytoskeleton. Its subcellular location is the spindle. It is found in the midbody. The enzyme catalyses gamma-L-glutamyl-L-glutamyl-[protein] + H2O = L-glutamyl-[protein] + L-glutamate. It catalyses the reaction (L-glutamyl)(n+1)-gamma-L-glutamyl-L-glutamyl-[protein] + H2O = (L-glutamyl)(n)-gamma-L-glutamyl-L-glutamyl-[protein] + L-glutamate. The catalysed reaction is C-terminal L-alpha-aminoacyl-L-glutamyl-[tubulin] + H2O = C-terminal L-alpha-aminoacyl-[tubulin] + L-glutamate. It carries out the reaction C-terminal L-alpha-aminoacyl-L-glutamyl-L-glutamyl-[tubulin] + H2O = C-terminal L-alpha-aminoacyl-L-glutamyl-[tubulin] + L-glutamate. Functionally, metallocarboxypeptidase that mediates deglutamylation of tubulin and non-tubulin target proteins. Catalyzes the removal of polyglutamate side chains present on the gamma-carboxyl group of glutamate residues within the C-terminal tail of alpha- and beta-tubulin. Cleaves alpha- and gamma-linked polyglutamate tubulin side-chain, as well as the branching point glutamate. Also catalyzes the removal of alpha-linked glutamate residues from the carboxy-terminus of alpha-tubulin. This Danio rerio (Zebrafish) protein is Cytosolic carboxypeptidase-like protein 5 (agbl5).